Reading from the N-terminus, the 387-residue chain is F-box protein At5g41490 (387 aa).

Positions 2 to 47 constitute an F-box domain; that stretch reads ATMITNLRRDLIEEIISRVPLRSMKAVRLTCKSWNNISKSEIFTKM.

The protein is F-box protein At5g41490 of Arabidopsis thaliana (Mouse-ear cress).